An 82-amino-acid polypeptide reads, in one-letter code: Large ribosomal subunit protein bL31B-2 (82 aa).

Belongs to the bacterial ribosomal protein bL31 family. Type B subfamily. In terms of assembly, part of the 50S ribosomal subunit.

This is Large ribosomal subunit protein bL31B-2 from Streptomyces avermitilis (strain ATCC 31267 / DSM 46492 / JCM 5070 / NBRC 14893 / NCIMB 12804 / NRRL 8165 / MA-4680).